Here is a 261-residue protein sequence, read N- to C-terminus: UPF0246 protein Daci_5283 (261 aa).

The protein belongs to the UPF0246 family.

This Delftia acidovorans (strain DSM 14801 / SPH-1) protein is UPF0246 protein Daci_5283.